We begin with the raw amino-acid sequence, 913 residues long: Transient receptor potential cation channel protein painless (913 aa).

Topologically, residues Met1–Arg490 are cytoplasmic. 3 ANK repeats span residues Gly154–Ser189, Glu260–Ser289, and Gly368–Ser397. Residues Leu491–Thr511 form a helical membrane-spanning segment. Over Tyr512–Arg523 the chain is Extracellular. Residues Ala524–Glu544 traverse the membrane as a helical segment. Residues Cys545–Tyr555 are Cytoplasmic-facing. Residues Phe556–Met576 traverse the membrane as a helical segment. At Glu577 to Arg586 the chain is on the extracellular side. Residues Val587–Leu607 traverse the membrane as a helical segment. The Cytoplasmic portion of the chain corresponds to Pro608–Lys628. The chain crosses the membrane as a helical span at residues Ser629–Gly649. Topologically, residues Lys650–Ser708 are extracellular. Residues Gln656 to Glu675 form a disordered region. The chain crosses the membrane as a helical span at residues Ile709–Leu729. Residues Leu730–Lys913 are Cytoplasmic-facing.

This sequence belongs to the transient receptor (TC 1.A.4) family. In terms of tissue distribution, present in multidendritic neurons, chordotonal neurons, a subset of cells in the central nervous system and a subset of sensory neurons in the antennal-maxillary complex. Not detected in gonads and dorsal vessels (at protein level). Expressed in peripheral neurons that extend multiple branched dendrites beneath the larval epidermis, similar to vertebrate pain receptors.

It is found in the membrane. In terms of biological role, receptor-activated non-selective cation channel involved in detection of pain sensation due to high temperature. Involved in heat nociception by being activated by noxious temperature of 38 degrees Celsius. This Drosophila melanogaster (Fruit fly) protein is Transient receptor potential cation channel protein painless (pain).